The sequence spans 191 residues: Ribonuclease HII (191 aa).

An RNase H type-2 domain is found at 7-191 (ILMAGVDEVG…YSPVADLISK (185 aa)). Residues Asp13, Glu14, and Asp103 each coordinate a divalent metal cation.

It belongs to the RNase HII family. Mn(2+) is required as a cofactor. It depends on Mg(2+) as a cofactor.

The protein localises to the cytoplasm. It catalyses the reaction Endonucleolytic cleavage to 5'-phosphomonoester.. Its function is as follows. Endonuclease that specifically degrades the RNA of RNA-DNA hybrids. This chain is Ribonuclease HII, found in Legionella pneumophila (strain Paris).